The sequence spans 166 residues: NADH-quinone oxidoreductase subunit A (166 aa).

3 consecutive transmembrane segments (helical) span residues 16–36 (FAVFLIGAVGLCGLMLLGAYF), 68–88 (FYLVAMFFVIFDVEALYLYAW), and 98–118 (IGFIEAAIFILVLLAGLFYLV). Positions 141–166 (RYASSHPQDISQELSVAGSQQANESR) are disordered.

This sequence belongs to the complex I subunit 3 family. NDH-1 is composed of 13 different subunits. Subunits NuoA, H, J, K, L, M, N constitute the membrane sector of the complex.

Its subcellular location is the cell inner membrane. The enzyme catalyses a quinone + NADH + 5 H(+)(in) = a quinol + NAD(+) + 4 H(+)(out). In terms of biological role, NDH-1 shuttles electrons from NADH, via FMN and iron-sulfur (Fe-S) centers, to quinones in the respiratory chain. The immediate electron acceptor for the enzyme in this species is believed to be ubiquinone. Couples the redox reaction to proton translocation (for every two electrons transferred, four hydrogen ions are translocated across the cytoplasmic membrane), and thus conserves the redox energy in a proton gradient. This is NADH-quinone oxidoreductase subunit A from Yersinia pseudotuberculosis serotype O:1b (strain IP 31758).